Here is a 176-residue protein sequence, read N- to C-terminus: Glutathione-regulated potassium-efflux system ancillary protein KefF (176 aa).

Residues His8, 14 to 17 (SHAN), 65 to 68 (MQWY), and 105 to 108 (TTGG) each bind FMN.

It belongs to the NAD(P)H dehydrogenase (quinone) family. KefF subfamily. In terms of assembly, homodimer. Interacts with KefC. Requires FMN as cofactor.

The protein resides in the cell inner membrane. It carries out the reaction a quinone + NADH + H(+) = a quinol + NAD(+). The catalysed reaction is a quinone + NADPH + H(+) = a quinol + NADP(+). Its function is as follows. Regulatory subunit of a potassium efflux system that confers protection against electrophiles. Required for full activity of KefC. Shows redox enzymatic activity, but this enzymatic activity is not required for activation of KefC. The polypeptide is Glutathione-regulated potassium-efflux system ancillary protein KefF (Salmonella gallinarum (strain 287/91 / NCTC 13346)).